The chain runs to 480 residues: Proline--tRNA ligase (480 aa).

Belongs to the class-II aminoacyl-tRNA synthetase family. ProS type 3 subfamily. In terms of assembly, homodimer.

The protein localises to the cytoplasm. It catalyses the reaction tRNA(Pro) + L-proline + ATP = L-prolyl-tRNA(Pro) + AMP + diphosphate. Functionally, catalyzes the attachment of proline to tRNA(Pro) in a two-step reaction: proline is first activated by ATP to form Pro-AMP and then transferred to the acceptor end of tRNA(Pro). The chain is Proline--tRNA ligase from Alkaliphilus oremlandii (strain OhILAs) (Clostridium oremlandii (strain OhILAs)).